Reading from the N-terminus, the 130-residue chain is S-protein homolog 30 (130 aa).

N-linked (GlcNAc...) asparagine glycans are attached at residues asparagine 64 and asparagine 77.

This sequence belongs to the plant self-incompatibility (S1) protein family.

Its subcellular location is the secreted. This is S-protein homolog 30 from Arabidopsis thaliana (Mouse-ear cress).